The chain runs to 588 residues: Cryptochrome-1 (588 aa).

The 130-residue stretch at 3–132 (VNAVHWFRKG…EVIVRISHTL (130 aa)) folds into the Photolyase/cryptochrome alpha/beta domain. Lys11 participates in a covalent cross-link: Glycyl lysine isopeptide (Lys-Gly) (interchain with G-Cter in ubiquitin). An LIR 1 motif is present at residues 50 to 54 (NRWRF). Position 71 is a phosphoserine; by AMPK (Ser71). An LIR 2 motif is present at residues 82 to 87 (DVFPRL). Lys107 is covalently cross-linked (Glycyl lysine isopeptide (Lys-Gly) (interchain with G-Cter in ubiquitin)). The short motif at 151 to 156 (KRFQTL) is the LIR 3 element. A Glycyl lysine isopeptide (Lys-Gly) (interchain with G-Cter in ubiquitin) cross-link involves residue Lys159. At Ser247 the chain carries Phosphoserine; by MAPK. FAD is bound at residue Ser252. Short sequence motifs (LIR) lie at residues 255 to 260 (LRFGCL) and 271 to 276 (DLYKKV). Ser280 is modified (phosphoserine; by AMPK). Positions 285–290 (SLYGQL) match the LIR 6 motif. Gln289 contacts FAD. Lys329 participates in a covalent cross-link: Glycyl lysine isopeptide (Lys-Gly) (interchain with G-Cter in ubiquitin). Residues 335–339 (TGFPW) carry the LIR 7 motif. His355 contributes to the FAD binding site. A required for inhibition of CLOCK-BMAL1-mediated transcription region spans residues 371–470 (WISWEEGMKV…LIGVNYPKPM (100 aa)). An LIR 8 motif is present at residues 379 to 384 (KVFEEL). Residue 387-389 (DAD) participates in FAD binding. Short sequence motifs (LIR) lie at residues 395–400 (GSWMWL), 411–416 (HCYCPV), and 430–435 (RRYLPV). The tract at residues 471–493 (VNHAEASRLNIERMKQIYQQLSR) is interaction with TIMELESS. Lys485 participates in a covalent cross-link: Glycyl lysine isopeptide (Lys-Gly) (interchain with G-Cter in ubiquitin). Short sequence motifs (LIR) lie at residues 486-491 (QIYQQL) and 492-497 (SRYRGL). The tract at residues 511–588 (GGLMGYAPGE…GPKVQRQSSN (78 aa)) is disordered. Over residues 545 to 568 (DSQQTNPLKQGRSSMGTGLSSGKR) the composition is skewed to polar residues. A Glycyl lysine isopeptide (Lys-Gly) (interchain with G-Cter in ubiquitin) cross-link involves residue Lys567. At Ser570 the chain carries Phosphoserine.

This sequence belongs to the DNA photolyase class-1 family. Component of the circadian core oscillator, which includes the CRY proteins, CLOCK or NPAS2, BMAL1 or BMAL2, CSNK1D and/or CSNK1E, TIMELESS, and the PER proteins. Interacts directly with TIMELESS. Interacts directly with PER1, PER2 and PER3; interaction with PER2 inhibits its ubiquitination and vice versa. Interacts with FBXL21. Interacts with FBXL3. Interacts with CLOCK-BMAL1 independently of PER2 and DNA. Interacts with HDAC1, HDAC2 and SIN3B. Interacts with nuclear receptors AR, NR1D1, NR3C1/GR, RORA and RORC; the interaction with at least NR3C1/GR is ligand dependent. Interacts with PRKDC. Interacts with the G protein subunit alpha GNAS; the interaction may block GPCR-mediated regulation of cAMP concentrations. Interacts with PRMT5. Interacts with EZH2. Interacts with MYBBP1A, DOCK7, HNRNPU, RPL7A, RPL8 and RPS3. Interacts with PPP5C (via TPR repeats). Interacts with MAP1LC3B. Interacts with CLOCK. Interacts with BMAL1. Interacts weakly with HDAC3; this interaction is enhanced in the presence of FBXL3. Interacts with TRIM28, KCTD5 and DDB1. Interacts with FOXO1. Interacts with DTL and DDB1-CUL4A complex. Interacts with HNF4A. Interacts with PSMD2 in a KDM8-dependent manner. Interacts with KDM8 in a FBXL3-dependent manner. Interacts with PPARG in a ligand-dependent manner. Interacts with PPARD (via domain NR LBD) and NR1I2 (via domain NR LBD) in a ligand-dependent manner. Interacts with PPARA, NR1I3 and VDR. FAD is required as a cofactor. Requires (6R)-5,10-methylene-5,6,7,8-tetrahydrofolate as cofactor. Post-translationally, phosphorylation on Ser-247 by MAPK is important for the inhibition of CLOCK-BMAL1-mediated transcriptional activity. Phosphorylation by CSNK1E requires interaction with PER1 or PER2. Phosphorylation at Ser-71 and Ser-280 by AMPK decreases protein stability. Phosphorylation at Ser-570 exhibits a robust circadian rhythm with a peak at CT8, increases protein stability, prevents SCF(FBXL3)-mediated degradation and is antagonized by interaction with PRKDC. Ubiquitinated by the SCF(FBXL3) and SCF(FBXL21) complexes, regulating the balance between degradation and stabilization. The SCF(FBXL3) complex is mainly nuclear and mediates ubiquitination and subsequent degradation of CRY1. In contrast, cytoplasmic SCF(FBXL21) complex-mediated ubiquitination leads to stabilize CRY1 and counteract the activity of the SCF(FBXL3) complex. The SCF(FBXL3) and SCF(FBXL21) complexes probably mediate ubiquitination at different Lys residues. Ubiquitination at Lys-11 and Lys-107 are specifically ubiquitinated by the SCF(FBXL21) complex but not by the SCF(FBXL3) complex. Ubiquitination may be inhibited by PER2. Deubiquitinated by USP7. In terms of processing, undergoes autophagy-mediated degradation in the liver in a time-dependent manner. Autophagic degradation of CRY1 (an inhibitor of gluconeogenesis) occurs during periods of reduced feeding allowing induction of gluconeogenesis and maintenance of blood glucose levels.

Its subcellular location is the cytoplasm. It is found in the nucleus. Transcriptional repressor which forms a core component of the circadian clock. The circadian clock, an internal time-keeping system, regulates various physiological processes through the generation of approximately 24 hour circadian rhythms in gene expression, which are translated into rhythms in metabolism and behavior. It is derived from the Latin roots 'circa' (about) and 'diem' (day) and acts as an important regulator of a wide array of physiological functions including metabolism, sleep, body temperature, blood pressure, endocrine, immune, cardiovascular, and renal function. Consists of two major components: the central clock, residing in the suprachiasmatic nucleus (SCN) of the brain, and the peripheral clocks that are present in nearly every tissue and organ system. Both the central and peripheral clocks can be reset by environmental cues, also known as Zeitgebers (German for 'timegivers'). The predominant Zeitgeber for the central clock is light, which is sensed by retina and signals directly to the SCN. The central clock entrains the peripheral clocks through neuronal and hormonal signals, body temperature and feeding-related cues, aligning all clocks with the external light/dark cycle. Circadian rhythms allow an organism to achieve temporal homeostasis with its environment at the molecular level by regulating gene expression to create a peak of protein expression once every 24 hours to control when a particular physiological process is most active with respect to the solar day. Transcription and translation of core clock components (CLOCK, NPAS2, BMAL1, BMAL2, PER1, PER2, PER3, CRY1 and CRY2) plays a critical role in rhythm generation, whereas delays imposed by post-translational modifications (PTMs) are important for determining the period (tau) of the rhythms (tau refers to the period of a rhythm and is the length, in time, of one complete cycle). A diurnal rhythm is synchronized with the day/night cycle, while the ultradian and infradian rhythms have a period shorter and longer than 24 hours, respectively. Disruptions in the circadian rhythms contribute to the pathology of cardiovascular diseases, cancer, metabolic syndromes and aging. A transcription/translation feedback loop (TTFL) forms the core of the molecular circadian clock mechanism. Transcription factors, CLOCK or NPAS2 and BMAL1 or BMAL2, form the positive limb of the feedback loop, act in the form of a heterodimer and activate the transcription of core clock genes and clock-controlled genes (involved in key metabolic processes), harboring E-box elements (5'-CACGTG-3') within their promoters. The core clock genes: PER1/2/3 and CRY1/2 which are transcriptional repressors form the negative limb of the feedback loop and interact with the CLOCK|NPAS2-BMAL1|BMAL2 heterodimer inhibiting its activity and thereby negatively regulating their own expression. This heterodimer also activates nuclear receptors NR1D1/2 and RORA/B/G, which form a second feedback loop and which activate and repress BMAL1 transcription, respectively. CRY1 and CRY2 have redundant functions but also differential and selective contributions at least in defining the pace of the SCN circadian clock and its circadian transcriptional outputs. More potent transcriptional repressor in cerebellum and liver than CRY2, though more effective in lengthening the period of the SCN oscillator. On its side, CRY2 seems to play a critical role in tuning SCN circadian period by opposing the action of CRY1. With CRY2, is dispensable for circadian rhythm generation but necessary for the development of intercellular networks for rhythm synchrony. Capable of translocating circadian clock core proteins such as PER proteins to the nucleus. Interacts with CLOCK-BMAL1 independently of PER proteins and is found at CLOCK-BMAL1-bound sites, suggesting that CRY may act as a molecular gatekeeper to maintain CLOCK-BMAL1 in a poised and repressed state until the proper time for transcriptional activation. Represses the CLOCK-BMAL1 induced transcription of BHLHE40/DEC1, ATF4, MTA1, KLF10 and NAMPT. May repress circadian target genes expression in collaboration with HDAC1 and HDAC2 through histone deacetylation. Mediates the clock-control activation of ATR and modulates ATR-mediated DNA damage checkpoint. In liver, mediates circadian regulation of cAMP signaling and gluconeogenesis by binding to membrane-coupled G proteins and blocking glucagon-mediated increases in intracellular cAMP concentrations and CREB1 phosphorylation. Inhibits hepatic gluconeogenesis by decreasing nuclear FOXO1 levels that down-regulates gluconeogenic gene expression. Besides its role in the maintenance of the circadian clock, is also involved in the regulation of other processes. Represses glucocorticoid receptor NR3C1/GR-induced transcriptional activity by binding to glucocorticoid response elements (GREs). Plays a key role in glucose and lipid metabolism modulation, in part, through the transcriptional regulation of genes involved in these pathways, such as LEP or ACSL4. Represses PPARD and its target genes in the skeletal muscle and limits exercise capacity. Plays an essential role in the generation of circadian rhythms in the retina. Represses the transcriptional activity of NR1I2. The chain is Cryptochrome-1 (Cry1) from Rattus norvegicus (Rat).